The following is an 863-amino-acid chain: MDAALGPPDAMAASEGDLTPMMSQYFELTRRYDDALVLFQVGDFYELFCAAAETAARICEVTLTAREDSTGQYPMAGVPIDTAEPYIEALLDAGYRVAVADQVQDPDEVSGVVDRAVTRVVTPGTVTEDELLGGADNNFVAALAGGRDADAGFGLALLDVSTGDCYATRLGDEARVRDELGRFTPAELVVGPGVDADRFADEAFVAAYDDDAFEPAAARERVADYFGGEDVLPTTAELRACGALLSYAEYTRGGAGDSQRLTYLNHVTRYSPTEHLQMDAVALRSLELFEQRSVHGTDGTALVDVLDETACALGRRKLTDWLRRPLVDSDAIAARHDAVGELVADPLSREELHEHLRDVYDIERLVSRVSRGRANARDLRALADTLAVVPEVRGLLADADARKLQSLREALDDLPEIRGLLDRAIVADPPQELTDGGVIRDGYDERLDDLRATERAGKQWVDDLEASERERTGVDSLKVGQNSVHGYYIEVTKANMDAVPEDYQRRQTLKNAERYVTPELKEREEEIVRAEQRAQDLEYELFVGIRERVAEAAERMQAVARALAAVDALASFAAVAAAHDYTKPVMGGDGIHIEGGRHPVVERTESGFVPNDTTLNDDRRVAVITGPNMSGKSTYMRQVAVIVVLAQAGCFVPAAAAELRVVDRVFTRVGASDDIAGGRSTFMVEMTELASILRAATDESLVLLDEVGRGTATTDGLAIARAVTEHIHDAVGATTLFATHHHELTADADRLPDALNLHFAATRGDDGVAFEHAVRAGAATASYGVEVARTAGVPEPVVDRARELLDAPATADGGDGGTTPTADANGQRGAAAGIVAELRDVSVAELTPIEALNVLNDLASRVD.

An ATP-binding site is contributed by 626–633 (GPNMSGKS).

Belongs to the DNA mismatch repair MutS family.

In terms of biological role, this protein is involved in the repair of mismatches in DNA. It is possible that it carries out the mismatch recognition step. This protein has a weak ATPase activity. This Halobacterium salinarum (strain ATCC 700922 / JCM 11081 / NRC-1) (Halobacterium halobium) protein is DNA mismatch repair protein MutS 2 (mutS2).